Consider the following 842-residue polypeptide: DNA topoisomerase-like protein cin-4 (842 aa).

Basic and acidic residues predominate over residues 1–26 (MSEEDRNVFTSIDKKGGGSKQMDDLN). The disordered stretch occupies residues 1 to 50 (MSEEDRNVFTSIDKKGGGSKQMDDLNQKCPKRKTSKLKGIPKLEDANDAG). One can recognise a Topo IIA-type catalytic domain in the interval 314–783 (IPCLVDGLKP…TWQDLWITDL (470 aa)).

This sequence belongs to the type II topoisomerase family.

Plays a role in the removal of cohesin from kinetochores on mitotic chromosomes and is required for centromere resolution. The chain is DNA topoisomerase-like protein cin-4 from Caenorhabditis elegans.